The primary structure comprises 46 residues: Protein YpdJ (46 aa).

Functionally, may be involved in H(2) production during fermentative growth. The sequence is that of Protein YpdJ (ypdJ) from Escherichia coli (strain K12).